Here is a 348-residue protein sequence, read N- to C-terminus: Histidinol-phosphate aminotransferase (348 aa).

N6-(pyridoxal phosphate)lysine is present on lysine 207.

The protein belongs to the class-II pyridoxal-phosphate-dependent aminotransferase family. Histidinol-phosphate aminotransferase subfamily. In terms of assembly, homodimer. Requires pyridoxal 5'-phosphate as cofactor.

The enzyme catalyses L-histidinol phosphate + 2-oxoglutarate = 3-(imidazol-4-yl)-2-oxopropyl phosphate + L-glutamate. Its pathway is amino-acid biosynthesis; L-histidine biosynthesis; L-histidine from 5-phospho-alpha-D-ribose 1-diphosphate: step 7/9. The protein is Histidinol-phosphate aminotransferase of Rippkaea orientalis (strain PCC 8801 / RF-1) (Cyanothece sp. (strain PCC 8801)).